A 1374-amino-acid polypeptide reads, in one-letter code: DNA-directed RNA polymerase subunit beta (1374 aa).

This sequence belongs to the RNA polymerase beta chain family. The RNAP catalytic core consists of 2 alpha, 1 beta, 1 beta' and 1 omega subunit. When a sigma factor is associated with the core the holoenzyme is formed, which can initiate transcription.

It carries out the reaction RNA(n) + a ribonucleoside 5'-triphosphate = RNA(n+1) + diphosphate. DNA-dependent RNA polymerase catalyzes the transcription of DNA into RNA using the four ribonucleoside triphosphates as substrates. The sequence is that of DNA-directed RNA polymerase subunit beta from Acidovorax sp. (strain JS42).